Here is a 664-residue protein sequence, read N- to C-terminus: Intraflagellar transport protein 70A2 (664 aa).

7 TPR repeats span residues 11 to 44 (DGEF…SSRS), 45 to 78 (RAGL…HPEL), 153 to 186 (PDGL…SGYQ), 188 to 220 (DVSY…GIRQ), 395 to 423 (QVQE…EKYI), 424 to 456 (PVLM…CNDH), and 458 to 491 (VWKL…NYDN). The stretch at 507-534 (YIMTSQNEEAEELMRKIEKEEEQLSYGD) forms a coiled coil. The TPR 8 repeat unit spans residues 543–576 (CIVNLVIGTLYCAKGNYDFGISRVIKSLEPYHKK).

The protein belongs to the TTC30/dfy-1/fleer family. In terms of assembly, interacts wit the IFT B complex component IFT52.

It is found in the cell projection. The protein localises to the cilium. Required for polyglutamylation of axonemal tubulin. Plays a role in anterograde intraflagellar transport (IFT), the process by which cilia precursors are transported from the base of the cilium to the site of their incorporation at the tip. This is Intraflagellar transport protein 70A2 (Ift70a2) from Mus musculus (Mouse).